The primary structure comprises 318 residues: Mitochondrial coenzyme A transporter SLC25A42 (318 aa).

Solcar repeat units follow at residues 31-117 (RQVL…YKRI), 129-214 (LPPW…LKSL), and 224-312 (PYPF…MQIL). A run of 6 helical transmembrane segments spans residues 33–53 (VLSSLLSGALAGALAKTAVAP), 89–109 (LWRGNSATMVRVVPYAAIQFS), 135–155 (LFAGALAGTTAASLTYPLDLV), 186–206 (LYHGFMPTVLGVIPYAGLSFF), 230–250 (MIFGACAGLIGQSASYPLDVV), and 293–313 (VKGPIAVGISFTTFDLMQILL).

It belongs to the mitochondrial carrier (TC 2.A.29) family.

The protein resides in the mitochondrion inner membrane. The enzyme catalyses ADP(out) + CoA(in) = ADP(in) + CoA(out). It carries out the reaction 3'-dephospho-CoA(in) + ADP(out) = 3'-dephospho-CoA(out) + ADP(in). The catalysed reaction is adenosine 3',5'-bisphosphate(in) + ADP(out) = adenosine 3',5'-bisphosphate(out) + ADP(in). It catalyses the reaction AMP(in) + ADP(out) = AMP(out) + ADP(in). The enzyme catalyses dADP(in) + ADP(out) = dADP(out) + ADP(in). It carries out the reaction ADP(in) + ATP(out) = ADP(out) + ATP(in). Functionally, mitochondrial carrier mediating the transport of coenzyme A (CoA) in mitochondria in exchange for intramitochondrial (deoxy)adenine nucleotides and adenosine 3',5'-diphosphate. This is Mitochondrial coenzyme A transporter SLC25A42 (SLC25A42) from Homo sapiens (Human).